An 87-amino-acid chain; its full sequence is U3-theraphotoxin-Hhn1h (87 aa).

The first 24 residues, 1 to 24, serve as a signal peptide directing secretion; the sequence is MVNMKASMFLTFAGLVLLFVVCYA. A propeptide spanning residues 25-52 is cleaved from the precursor; sequence SESEEKEFPKEMLSSIFAVDNDSKQEER. 3 disulfide bridges follow: Cys-54–Cys-67, Cys-61–Cys-72, and Cys-66–Cys-79.

It belongs to the neurotoxin 10 (Hwtx-1) family. 51 (Hntx-8) subfamily. Hntx-8 sub-subfamily. Expressed by the venom gland.

Its subcellular location is the secreted. Ion channel inhibitor. The polypeptide is U3-theraphotoxin-Hhn1h (Cyriopagopus hainanus (Chinese bird spider)).